The primary structure comprises 213 residues: MKAYQREFIEFALEKEVLKFGEFTLKSGRKSPYFFNAGLFNTGRDLARLGRFYAAALADSGIEFDVLFGPAYKGIPIATTTAVALADHHDVDTPYCFNRKEAKNHGEGGNLVGSELEGRIMLVDDVITAGTAIRESMEIIQANGADLAGVLVAIDRQEKGKGELSAIQEVERDFGCAIISIVSLTDLVTFLEEKGTDAAHLESVKAYRAQYGI.

Lys-26 serves as a coordination point for 5-phospho-alpha-D-ribose 1-diphosphate. 34-35 contributes to the orotate binding site; it reads FF. Residues 72–73, Arg-99, Lys-100, Lys-103, His-105, and 124–132 each bind 5-phospho-alpha-D-ribose 1-diphosphate; these read YK and DDVITAGTA. Thr-128 and Arg-156 together coordinate orotate.

Belongs to the purine/pyrimidine phosphoribosyltransferase family. PyrE subfamily. Homodimer. The cofactor is Mg(2+).

The catalysed reaction is orotidine 5'-phosphate + diphosphate = orotate + 5-phospho-alpha-D-ribose 1-diphosphate. It participates in pyrimidine metabolism; UMP biosynthesis via de novo pathway; UMP from orotate: step 1/2. Functionally, catalyzes the transfer of a ribosyl phosphate group from 5-phosphoribose 1-diphosphate to orotate, leading to the formation of orotidine monophosphate (OMP). The sequence is that of Orotate phosphoribosyltransferase from Vibrio atlanticus (strain LGP32) (Vibrio splendidus (strain Mel32)).